The following is a 341-amino-acid chain: MATIKDVAKRANVSTTTVSHVINKTRFVAEETRNAVWAAIKELHYSPSAVARSLKVNHTKSIGLLATSSEAAYFAEIIESVEKSCFQKGYTLILGNAWNDPEKQRAYLSMMAQKRVDGLLVMCSEYPDSVLSMLEEYRHIPMVVMDWGEAKADFTDAVIDNAFQGGYIAGRYLIERGHREIGVIPGPLERNTGAGRLAGFMQAMKEAHISVPENWIVQGDFEPESGYRAMQQILSQQHRPTAVFCGGDIMAMGAICAADEMGLRVPQDISLIGYDNVRNARYFSPALTTIHQPKDSLGEAAFNMLLDRIVNKREESQSIEVHPRLVERRSVADGPFVDYRR.

The HTH lacI-type domain occupies 2–56; the sequence is ATIKDVAKRANVSTTTVSHVINKTRFVAEETRNAVWAAIKELHYSPSAVARSLKV. The H-T-H motif DNA-binding region spans 4–23; sequence IKDVAKRANVSTTTVSHVIN. The DNA-binding element occupies 48-56; that stretch reads SAVARSLKV. Y73, R190, T192, F221, and D275 together coordinate hypoxanthine.

In terms of assembly, homodimer.

The protein operates within purine metabolism; purine nucleotide biosynthesis [regulation]. Its function is as follows. Is the main repressor of the genes involved in the de novo synthesis of purine nucleotides, regulating purB, purC, purEK, purF, purHD, purL, purMN and guaBA expression. PurR is allosterically activated to bind its cognate DNA by binding the purine corepressors, hypoxanthine or guanine, thereby effecting transcription repression. The polypeptide is HTH-type transcriptional repressor PurR (Klebsiella pneumoniae (strain 342)).